The chain runs to 514 residues: Membrane-bound lytic murein transglycosylase F (514 aa).

A signal peptide spans 1-30 (MKKLKINYLFIGILTLLLAAALWPSIPWFG). Residues 31 to 269 (KTENHIAAIQ…RIEEKYLGHG (239 aa)) are non-LT domain. The interval 270–514 (DDFDYVDTRS…LFTPQKKEEK (245 aa)) is LT domain. Residue E314 is part of the active site.

The protein in the N-terminal section; belongs to the bacterial solute-binding protein 3 family. In the C-terminal section; belongs to the transglycosylase Slt family.

The protein localises to the cell outer membrane. The catalysed reaction is Exolytic cleavage of the (1-&gt;4)-beta-glycosidic linkage between N-acetylmuramic acid (MurNAc) and N-acetylglucosamine (GlcNAc) residues in peptidoglycan, from either the reducing or the non-reducing ends of the peptidoglycan chains, with concomitant formation of a 1,6-anhydrobond in the MurNAc residue.. In terms of biological role, murein-degrading enzyme that degrades murein glycan strands and insoluble, high-molecular weight murein sacculi, with the concomitant formation of a 1,6-anhydromuramoyl product. Lytic transglycosylases (LTs) play an integral role in the metabolism of the peptidoglycan (PG) sacculus. Their lytic action creates space within the PG sacculus to allow for its expansion as well as for the insertion of various structures such as secretion systems and flagella. The chain is Membrane-bound lytic murein transglycosylase F from Salmonella typhimurium (strain LT2 / SGSC1412 / ATCC 700720).